The primary structure comprises 159 residues: RNA pyrophosphohydrolase (159 aa).

In terms of domain architecture, Nudix hydrolase spans 6 to 149 (GFRPNVGIIL…KREVYRRALK (144 aa)). The Nudix box signature appears at 38 to 59 (GGINDRESPEEALYRELNEEVG).

The protein belongs to the Nudix hydrolase family. RppH subfamily. It depends on a divalent metal cation as a cofactor.

Accelerates the degradation of transcripts by removing pyrophosphate from the 5'-end of triphosphorylated RNA, leading to a more labile monophosphorylated state that can stimulate subsequent ribonuclease cleavage. The protein is RNA pyrophosphohydrolase of Ectopseudomonas mendocina (strain ymp) (Pseudomonas mendocina).